Here is a 316-residue protein sequence, read N- to C-terminus: uncharacterized protein (316 aa).

Residues 26–98 (ERIDRFLAGA…IPLDVVYEDA (73 aa)) form the S4 RNA-binding domain. Aspartate 148 is an active-site residue.

This sequence belongs to the pseudouridine synthase RluA family.

It carries out the reaction a uridine in RNA = a pseudouridine in RNA. This is an uncharacterized protein from Chloroflexus aurantiacus (strain ATCC 29366 / DSM 635 / J-10-fl).